A 537-amino-acid chain; its full sequence is Mitochondrial distribution and morphology protein 34 (537 aa).

An SMP-LTD domain is found at 1–195 (MAFNFNWSPL…LPAIIHRLSL (195 aa)). 4 disordered regions span residues 320 to 339 (YTFSDNGSQDQGSLPSRPSL), 348 to 403 (GLSL…IMPH), 421 to 493 (GRSP…DTSS), and 516 to 537 (KNGNPTFWDDQDDTPPPAYEAR). Over residues 355-371 (RHSKAGRKKKTRVVNLR) the composition is skewed to basic residues. Over residues 378 to 391 (ANSEEEEDTPETDS) the composition is skewed to acidic residues. Residues 425–441 (DLQQQPRRPSFRAQATN) are compositionally biased toward polar residues.

This sequence belongs to the MDM34 family. As to quaternary structure, component of the ER-mitochondria encounter structure (ERMES) or MDM complex, composed of MMM1, MDM10, MDM12 and MDM34.

The protein localises to the mitochondrion outer membrane. In terms of biological role, component of the ERMES/MDM complex, which serves as a molecular tether to connect the endoplasmic reticulum (ER) and mitochondria. Components of this complex are involved in the control of mitochondrial shape and protein biogenesis, and function in nonvesicular lipid trafficking between the ER and mitochondria. MDM34 is required for the interaction of the ER-resident membrane protein MMM1 and the outer mitochondrial membrane-resident beta-barrel protein MDM10. This is Mitochondrial distribution and morphology protein 34 from Chaetomium globosum (strain ATCC 6205 / CBS 148.51 / DSM 1962 / NBRC 6347 / NRRL 1970) (Soil fungus).